The chain runs to 94 residues: ERRCDPRRLSDCEDFVRGRSKGGRGEKECRLSERCCTELQKMPRECRCEAVEGMYKEAERKERGEGEQRQRLERARALPGLCSIEPSYCEIRPS.

3 disulfides stabilise this stretch: Cys12/Cys35, Cys36/Cys82, and Cys48/Cys89.

This sequence belongs to the 2S seed storage albumins family. As to expression, expressed in seeds (at protein level).

Its function is as follows. Cysteine protease inhibitor that likely functions in defense against insects by inhibiting cysteine proteases in the midgut of herbivore insects such as C.maculatus. Selectively inhibits cathepsin L, as well as papain, ficin and bromelain with lower efficiency. Shows antitumor activity, inhibiting the growth of prostate cancer cell lines PC3 and DU145, and the gastric cancer cell line Hs746T. No activity against cathepsin B or serine proteases (trypsin, human plasma kallikrein and elastase). In Araucaria angustifolia (Brazilian pine tree), this protein is 2S albumin-like cysteine protease inhibitor.